The chain runs to 669 residues: DNA ligase (669 aa).

NAD(+) is bound by residues aspartate 32–aspartate 36, serine 81–leucine 82, and glutamate 113. Lysine 115 serves as the catalytic N6-AMP-lysine intermediate. Residues arginine 136, glutamate 173, lysine 290, and lysine 314 each contribute to the NAD(+) site. Zn(2+) contacts are provided by cysteine 408, cysteine 411, cysteine 426, and cysteine 432. The 78-residue stretch at alanine 592 to lysine 669 folds into the BRCT domain.

The protein belongs to the NAD-dependent DNA ligase family. LigA subfamily. The cofactor is Mg(2+). Requires Mn(2+) as cofactor.

The enzyme catalyses NAD(+) + (deoxyribonucleotide)n-3'-hydroxyl + 5'-phospho-(deoxyribonucleotide)m = (deoxyribonucleotide)n+m + AMP + beta-nicotinamide D-nucleotide.. In terms of biological role, DNA ligase that catalyzes the formation of phosphodiester linkages between 5'-phosphoryl and 3'-hydroxyl groups in double-stranded DNA using NAD as a coenzyme and as the energy source for the reaction. It is essential for DNA replication and repair of damaged DNA. This Vibrio cholerae serotype O1 (strain ATCC 39541 / Classical Ogawa 395 / O395) protein is DNA ligase.